Consider the following 350-residue polypeptide: Protein RecA (350 aa).

67–74 (GPESSGKT) provides a ligand contact to ATP.

It belongs to the RecA family.

Its subcellular location is the cytoplasm. Its function is as follows. Can catalyze the hydrolysis of ATP in the presence of single-stranded DNA, the ATP-dependent uptake of single-stranded DNA by duplex DNA, and the ATP-dependent hybridization of homologous single-stranded DNAs. It interacts with LexA causing its activation and leading to its autocatalytic cleavage. In Baumannia cicadellinicola subsp. Homalodisca coagulata, this protein is Protein RecA.